We begin with the raw amino-acid sequence, 329 residues long: MSEEFPTPQLLDELEDQQKVTTPNEKRELSSNRVLKDIFAGTIGGIAQVLVGQPFDTTKVRLQTATTRTTTLEVLRNLVKNEGVFAFYKGALTPLLGVGICVSVQFGVNEAMKRFFQNYNASKNPNMSSQDVDLSRSNTLPLSQYYVCGLTGGVVNSFLASPIEQIRIRLQTQTSNGGDREFKGPWDCIKKLKAQGGLMRGLFPTMIRAGHGLGTYFLVYEALVAREIGTGLTRNEIPPWKLCLFGAFSGTMLWLTVYPLDVVKSIIQNDDLRKPKYKNSISYVAKTIYAKEGIRAFFKGFGPTMVRSAPVNGATFLTFELVMRFLGEE.

The interval 1–27 is disordered; it reads MSEEFPTPQLLDELEDQQKVTTPNEKR. The transit peptide at 1 to 33 directs the protein to the mitochondrion; the sequence is MSEEFPTPQLLDELEDQQKVTTPNEKRELSSNR. 3 Solcar repeats span residues 34-115, 143-226, and 238-325; these read VLKD…MKRF, SQYY…LVAR, and PPWK…VMRF. Helical transmembrane passes span 38–58, 84–104, 140–160, 205–225, 243–263, and 297–318; these read IFAG…FDTT, VFAF…CVSV, LPLS…SFLA, TMIR…ALVA, CLFG…LDVV, and FFKG…TFLT.

The protein belongs to the mitochondrial carrier (TC 2.A.29) family.

It is found in the mitochondrion inner membrane. In Saccharomyces cerevisiae (strain ATCC 204508 / S288c) (Baker's yeast), this protein is Carrier protein YMC2, mitochondrial (YMC2).